The following is a 436-amino-acid chain: MSDTHLSTQKFADFPLHKEVHQALNEAGFEFCTPIQALSLPILLEKKDIAGQAQTGTGKTLAFLVATFNHLLSTPIPAERQLNQPRAIIMAPTRELAIQIAKDANLLAKHTGLKVGIVYGGEGYEVQRKVLDKGVDILIGTTGRIIDYVRQGVINVSCIQAVVLDEADRMFDLGFIKDIRFLFRRMPDAKSRLNMLFSATLSMKVQELAYDHMNEPEKVEIAPNEKTSKNIKEEIFYPSMEEKMPLLLSLLEEDWPEKAIVFSNTKHSCEKVWSWLEGDGHRAGLLTGDVPQKKRLRILEQFTKGEIDILVATDVAARGLHIADVSHVYNYDLPDDCEDYVHRIGRTGRAGQKGISVSFACEEYALNLPAIESYIQHSIPVTSYDSDALLDDIPPPVRIHRKPSTHTRNTRDRGASRPQGGQRSGPRRHDRTRRHS.

A Q motif motif is present at residues 9–37 (QKFADFPLHKEVHQALNEAGFEFCTPIQA). Residues 40–219 (LPILLEKKDI…YDHMNEPEKV (180 aa)) form the Helicase ATP-binding domain. An ATP-binding site is contributed by 53–60 (AQTGTGKT). The DEAD box signature appears at 165–168 (DEAD). A Helicase C-terminal domain is found at 243–390 (KMPLLLSLLE…VTSYDSDALL (148 aa)). The segment at 392-436 (DIPPPVRIHRKPSTHTRNTRDRGASRPQGGQRSGPRRHDRTRRHS) is disordered. The span at 425 to 436 (GPRRHDRTRRHS) shows a compositional bias: basic residues.

Belongs to the DEAD box helicase family. RhlB subfamily. In terms of assembly, component of the RNA degradosome, which is a multiprotein complex involved in RNA processing and mRNA degradation.

The protein resides in the cytoplasm. The catalysed reaction is ATP + H2O = ADP + phosphate + H(+). In terms of biological role, DEAD-box RNA helicase involved in RNA degradation. Has RNA-dependent ATPase activity and unwinds double-stranded RNA. This is ATP-dependent RNA helicase RhlB from Shewanella halifaxensis (strain HAW-EB4).